Consider the following 1064-residue polypeptide: Error-prone DNA polymerase (1064 aa).

It belongs to the DNA polymerase type-C family. DnaE2 subfamily.

The protein resides in the cytoplasm. It catalyses the reaction DNA(n) + a 2'-deoxyribonucleoside 5'-triphosphate = DNA(n+1) + diphosphate. In terms of biological role, DNA polymerase involved in damage-induced mutagenesis and translesion synthesis (TLS). It is not the major replicative DNA polymerase. This chain is Error-prone DNA polymerase, found in Azoarcus sp. (strain BH72).